The sequence spans 102 residues: Small ribosomal subunit protein bS6 (102 aa).

This sequence belongs to the bacterial ribosomal protein bS6 family.

Binds together with bS18 to 16S ribosomal RNA. In Deinococcus geothermalis (strain DSM 11300 / CIP 105573 / AG-3a), this protein is Small ribosomal subunit protein bS6.